Here is a 221-residue protein sequence, read N- to C-terminus: MNYLTHQLLNPKEINLLKKNLTLQDISWEDGKKTAGNHAAKVKNNLQLDRSSNISKKCTGLIEKKILSDVLIKSFALPKRIHGTMFTKTLKGMKYGRHIDNAFMSSGRADLSFTIFLNEKDKYSGGELLIEGLNSEDKFKLDSGGIIIYPSTYLHSVLEVFSGERFVVVGWIESYVKSIEEREYLFDLDAGARSLLAKHGRSDELDLIFKSYSNLLRTLGE.

Residues 80–174 (RIHGTMFTKT…RFVVVGWIES (95 aa)) enclose the Fe2OG dioxygenase domain. The Fe cation site is built by His-98, Asp-100, and His-155. 2-oxoglutarate is bound at residue Arg-165.

Fe(2+) is required as a cofactor. The cofactor is L-ascorbate.

This Prochlorococcus marinus (strain MIT 9215) protein is PKHD-type hydroxylase P9215_13741.